The chain runs to 202 residues: Transmembrane 4 L6 family member 4 (202 aa).

Over 1–9 the chain is Cytoplasmic; it reads MCTGGCARC. Residues 10–30 traverse the membrane as a helical segment; it reads LGGTLIPLAFFGFLANILLFF. Topologically, residues 31–45 are extracellular; it reads PGGKVIDDNDHLSQE. A helical membrane pass occupies residues 46-66; that stretch reads IWFFGGILGSGVLMIFPALVF. At 67–93 the chain is on the cytoplasmic side; sequence LGLKNNDCCGCCGNEGCGKRFAMFTST. Residues 94-114 traverse the membrane as a helical segment; that stretch reads IFAVVGFLGAGYSFIISAISI. Topologically, residues 115–158 are extracellular; it reads NKGPKCLMANSTWGYPFHDGDYLNDEALWNKCREPLNVVPWNLT. Asn124 and Asn156 each carry an N-linked (GlcNAc...) asparagine glycan. Residues 159 to 179 form a helical membrane-spanning segment; that stretch reads LFSILLVVGGIQMVLCAIQVV. The Cytoplasmic segment spans residues 180–202; it reads NGLLGTLCGDCQCCGCCGGDGPV.

This sequence belongs to the L6 tetraspanin family. Post-translationally, N-glycosylated. Glycosylation is required for the growth inhibitory effect. As to expression, jejunum and liver.

The protein resides in the membrane. Regulates the adhesive and proliferative status of intestinal epithelial cells. Can mediate density-dependent cell proliferation. The chain is Transmembrane 4 L6 family member 4 (TM4SF4) from Homo sapiens (Human).